The sequence spans 298 residues: MFNSDKVKIGICPIGWTNDDMPDLGKENTFEQAISEMALAGFKGTEIGNKYPKDVKVLKKALEMRNLQIASAWFSSFLTTKPYEETEKEFIAYRDFLHAMGSKVIVVSEQGHSIQGQMETPIFDGKYHFNEEEWNLLANGLNKLGQLAADKGMKIVYHHHMGTGVQTTEEIDKLMSVTDENLVYLLFDTGHLVYSGENPVEILKKYVHRIKHVHLKDIRPEIVSKVKNEKLSFLKGVRAGAFTVPGDGSIDFEPIFKILAENNYEGWLMIEAEQDPSIANPLEYAIKGRQYIKEKASI.

Belongs to the IolE/MocC family. Glutathione serves as cofactor. The cofactor is Co(2+). It depends on Mn(2+) as a cofactor.

It catalyses the reaction scyllo-inosose = 3D-3,5/4-trihydroxycyclohexane-1,2-dione + H2O. It functions in the pathway polyol metabolism; myo-inositol degradation into acetyl-CoA; acetyl-CoA from myo-inositol: step 2/7. Its function is as follows. Catalyzes the dehydration of inosose (2-keto-myo-inositol, 2KMI or 2,4,6/3,5-pentahydroxycyclohexanone) to 3D-(3,5/4)-trihydroxycyclohexane-1,2-dione (D-2,3-diketo-4-deoxy-epi-inositol). The protein is Inosose dehydratase of Clostridium botulinum (strain Alaska E43 / Type E3).